A 227-amino-acid chain; its full sequence is Small ribosomal subunit protein uS3 (227 aa).

The region spanning 38-106 (LRKYLREKLA…EVHLNIVEIR (69 aa)) is the KH type-2 domain.

It belongs to the universal ribosomal protein uS3 family. Part of the 30S ribosomal subunit. Forms a tight complex with proteins S10 and S14.

Binds the lower part of the 30S subunit head. Binds mRNA in the 70S ribosome, positioning it for translation. This is Small ribosomal subunit protein uS3 from Paramagnetospirillum magneticum (strain ATCC 700264 / AMB-1) (Magnetospirillum magneticum).